The chain runs to 278 residues: Undecaprenyl-diphosphatase 1 (278 aa).

The next 6 membrane-spanning stretches (helical) occupy residues 45-65 (AVIGFSAVIQVGAIAAVLVYF), 95-115 (WWVIYATIPIVLVGLAAKPLI), 119-139 (LASLWVVAGSLIVGSGVMWWA), 191-211 (VAATRLSFFLGIPALTGAGLY), 225-245 (PLAVGTLVSFVVAYASIAWLL), and 256-276 (FVVYRIAVGVLLFGLLGTGVL).

This sequence belongs to the UppP family.

The protein resides in the cell membrane. It catalyses the reaction di-trans,octa-cis-undecaprenyl diphosphate + H2O = di-trans,octa-cis-undecaprenyl phosphate + phosphate + H(+). Catalyzes the dephosphorylation of undecaprenyl diphosphate (UPP). Confers resistance to bacitracin. The sequence is that of Undecaprenyl-diphosphatase 1 from Streptomyces coelicolor (strain ATCC BAA-471 / A3(2) / M145).